A 274-amino-acid chain; its full sequence is Formamidopyrimidine-DNA glycosylase (274 aa).

Residue P2 is the Schiff-base intermediate with DNA of the active site. Residue E3 is the Proton donor of the active site. K57 (proton donor; for beta-elimination activity) is an active-site residue. Residues H90, R109, and K150 each contribute to the DNA site. Residues 235-269 (FVYGRKDKACLICGHTIESIKQGQRSTFFCRHCQH) form an FPG-type zinc finger. R259 (proton donor; for delta-elimination activity) is an active-site residue.

It belongs to the FPG family. In terms of assembly, monomer. It depends on Zn(2+) as a cofactor.

It catalyses the reaction Hydrolysis of DNA containing ring-opened 7-methylguanine residues, releasing 2,6-diamino-4-hydroxy-5-(N-methyl)formamidopyrimidine.. It carries out the reaction 2'-deoxyribonucleotide-(2'-deoxyribose 5'-phosphate)-2'-deoxyribonucleotide-DNA = a 3'-end 2'-deoxyribonucleotide-(2,3-dehydro-2,3-deoxyribose 5'-phosphate)-DNA + a 5'-end 5'-phospho-2'-deoxyribonucleoside-DNA + H(+). Functionally, involved in base excision repair of DNA damaged by oxidation or by mutagenic agents. Acts as a DNA glycosylase that recognizes and removes damaged bases. Has a preference for oxidized purines, such as 7,8-dihydro-8-oxoguanine (8-oxoG). Has AP (apurinic/apyrimidinic) lyase activity and introduces nicks in the DNA strand. Cleaves the DNA backbone by beta-delta elimination to generate a single-strand break at the site of the removed base with both 3'- and 5'-phosphates. This chain is Formamidopyrimidine-DNA glycosylase, found in Proteus mirabilis (strain HI4320).